A 618-amino-acid chain; its full sequence is MTQEYDNKRPVLVLQNEALYPQRRSYTSEDEAWKSFLENPLTAATKAMMSINGDEDSAAALGLLYDYYKVPRERRSSAVKPEGEHPEPEHSKRNSIPNVTEQPLISAGENRVQVLKNVPFNIVLPHSNQLGIDKRGHLTAPDTTVTVSIATMPTHSIKTEIQPHGFAVGIPPAVYHSEPTERVVVFDRSLSTDQFSSGTQPPNAQRRTPDSTFSETFKEGVQEVFFPSELSLRMPGMNSEDYVFDNVSGNNFEYTLEASKSLRQKQGDSTMTYLNKGQFYPVTLKEGSSNEGIHHPISKVRSVIMVVFAEDKSREDQLRHWKYWHSRQHTAKQRCIDIADYKESFNTISNIEEIAYNAISFTWDINDEAKVFISVNCLSTDFSSQKGVKGLPLNIQIDTYSYNNRSNKPVHRAYCQIKVFCDKGAERKIRDEERKQSKRKVSDVKVQLLPSHKRTDITVFKPFLDLDTQPVLFIPDVHFTNLQRGSHVLSLPSEELEGEGSVLKRGPFGTEDDFGVPPPAKLTRTEEPKRVLLYVRKESEEVFDALMLKTPSLKGLMEAISDKYDVPHDKIGKIFKKCKKGILVNMDDNIVKHYSNEDTFQLQIEEAGGSYKLTLTEI.

The interval 1-91 (MTQEYDNKRP…EGEHPEPEHS (91 aa)) is transcription activation. Residues 76–92 (SSAVKPEGEHPEPEHSK) show a composition bias toward basic and acidic residues. Residues 76–100 (SSAVKPEGEHPEPEHSKRNSIPNVT) form a disordered region. T208 carries the post-translational modification Phosphothreonine. Residues 248 to 474 (SGNNFEYTLE…DLDTQPVLFI (227 aa)) form the Grh/CP2 DB domain. Interaction with DNA stretches follow at residues 380-389 (TDFSSQKGVK) and 427-430 (RKIR).

Belongs to the grh/CP2 family. Grainyhead subfamily. Binds DNA as homodimer. Homodimer, also forms heterodimers with GRHL2 or GRHL3. Methylation at Arg-9 and Lys-116 may be involved in regulating transcriptional activation. In terms of tissue distribution, isoform 1 is highly expressed in brain, pancreas, tonsil, placenta and kidney. Isoform 2 is highly expressed in brain and liver. Expression in the skin is confined to the suprabasal layers of the epidermis and to the hair follicles.

Its subcellular location is the nucleus. Functionally, transcription factor involved in epithelial development. Binds directly to the consensus DNA sequence 5'-AACCGGTT-3'. Important regulator of DSG1 in the context of hair anchorage and epidermal differentiation, participates in the maintenance of the skin barrier. There is no genetic interaction with GRHL3, nor functional cooperativity due to diverse target gene selectivity during epithelia development. May play a role in regulating glucose homeostasis and insulin signaling. The sequence is that of Grainyhead-like protein 1 homolog from Mus musculus (Mouse).